The following is a 165-amino-acid chain: Nucleotide-binding protein Cagg_1607 (165 aa).

It belongs to the YajQ family.

Functionally, nucleotide-binding protein. The polypeptide is Nucleotide-binding protein Cagg_1607 (Chloroflexus aggregans (strain MD-66 / DSM 9485)).